A 333-amino-acid polypeptide reads, in one-letter code: N-acetyl-gamma-glutamyl-phosphate reductase (333 aa).

Cys145 is an active-site residue.

This sequence belongs to the NAGSA dehydrogenase family. Type 1 subfamily.

Its subcellular location is the cytoplasm. It catalyses the reaction N-acetyl-L-glutamate 5-semialdehyde + phosphate + NADP(+) = N-acetyl-L-glutamyl 5-phosphate + NADPH + H(+). The protein operates within amino-acid biosynthesis; L-arginine biosynthesis; N(2)-acetyl-L-ornithine from L-glutamate: step 3/4. Functionally, catalyzes the NADPH-dependent reduction of N-acetyl-5-glutamyl phosphate to yield N-acetyl-L-glutamate 5-semialdehyde. This chain is N-acetyl-gamma-glutamyl-phosphate reductase, found in Salinispora tropica (strain ATCC BAA-916 / DSM 44818 / JCM 13857 / NBRC 105044 / CNB-440).